Reading from the N-terminus, the 448-residue chain is MGSKKLTVGSDSHRLSKSSFSSNKSSHSATKDQPIDTDDIDEDDESGHNIILNIISQLRPGCDLTRITLPTFILEKKSMLERVTNQLQFPEFLLQAHSEKDPLKRFLYVMKWYLAGWHIAPKAVKKPLNPVLGEYFTAYWDLPNKQQAYYISEQTSHHPPECAYFYMIPESSIRVDGVVIPKSRFLGNSSAAMMDGSTVLQFLDIKDGNGKPEKYVLTQPNVYVRGILFGKMRIELGDHMIIKSPNFQADIEFKTKGYVFGTYDAIEGTVKDYDGNAYYEISGKWNDVMYLKDLKQPRSSPKVFLDTHKESPLRPKVRPLSEQGEYESRKLWKKVTDALAVRNHPVATEEKFQIEDHQRQLAKKRIEDGVEFHPKLFRRSKPGEDLDYCIYKNIPVDEDPEKQIRSILQIAPILPGQQFTDKFFIPAFEKIKSQKKMIENEKQNPAKQ.

The disordered stretch occupies residues 1-42; it reads MGSKKLTVGSDSHRLSKSSFSSNKSSHSATKDQPIDTDDIDE. Ser-16 is modified (phosphoserine). Positions 17–28 are enriched in low complexity; the sequence is KSSFSSNKSSHS. Residues 54-391 are OSBP-related domain (ORD); it reads IISQLRPGCD…PGEDLDYCIY (338 aa). A 1,2-diacyl-sn-glycero-3-phospho-(1D-myo-inositol 4-phosphate)-binding positions include 64 to 69, 126 to 129, and 157 to 158; these read LTRITL, KPLN, and HH. A 1,2-diacyl-sn-glycero-3-phospho-L-serine-binding positions include 64-69 and Asn-129; that span reads LTRITL. Ser-183 contacts a 1,2-diacyl-sn-glycero-3-phospho-L-serine. Residues Lys-351, Glu-355, and Arg-359 each contribute to the a 1,2-diacyl-sn-glycero-3-phospho-(1D-myo-inositol 4-phosphate) site.

This sequence belongs to the OSBP family. Interacts with the AAA ATPase VPS4; regulates OSH6 membrane association. VPS4 is required for membrane dissociation of OSH6.

It is found in the cytoplasm. The protein resides in the cell membrane. The protein localises to the endoplasmic reticulum membrane. It catalyses the reaction a 1,2-diacyl-sn-glycero-3-phospho-L-serine(in) = a 1,2-diacyl-sn-glycero-3-phospho-L-serine(out). Its function is as follows. Lipid transport protein (LTP) involved in non-vesicular transfer of lipids between membranes. Functions in phosphoinositide-coupled directional transport of various lipids by carrying the lipid molecule in a hydrophobic pocket and transferring it between membranes through the cytosol. Involved in maintenance of intracellular sterol distribution and homeostasis. Catalyzes the lipid countertransport between the endoplasmic reticulum (ER) and the plasma membrane (PM). Specifically exchanges phosphatidylserine (PS) with phosphatidylinositol 4-phosphate (PI4P), delivering phosphatidylserine to the PM in exchange for PI4P, which is delivered to the ER-localized PI4P phosphatase SAC1 for degradation. Thus, by maintaining a PI4P gradient at the ER/PM interface, SAC1 drives PS transport. Binds phosphatidylserine and PI4P in a mutually exclusive manner. Also binds phosphatidic acid (PA). The sequence is that of Oxysterol-binding protein homolog 6 from Saccharomyces cerevisiae (strain ATCC 204508 / S288c) (Baker's yeast).